The sequence spans 578 residues: Probable arginine--tRNA ligase, mitochondrial (578 aa).

The N-terminal 16 residues, 1 to 16 (MACGFRRAIACQLSRV), are a transit peptide targeting the mitochondrion. L-arginine contacts are provided by residues 133–135 (SPN), His-144, Tyr-322, Asp-326, and Gln-350. The 'HIGH' region signature appears at 133–144 (SPNVAKKFHVGH). Lys-568 carries the post-translational modification N6-acetyllysine.

This sequence belongs to the class-I aminoacyl-tRNA synthetase family.

The protein resides in the mitochondrion membrane. It catalyses the reaction tRNA(Arg) + L-arginine + ATP = L-arginyl-tRNA(Arg) + AMP + diphosphate. Its function is as follows. Catalyzes the attachment of arginine to tRNA(Arg) in a two-step reaction: arginine is first activated by ATP to form Arg-AMP and then transferred to the acceptor end of tRNA(Arg). This is Probable arginine--tRNA ligase, mitochondrial (RARS2) from Homo sapiens (Human).